Here is a 931-residue protein sequence, read N- to C-terminus: Adhesion G protein-coupled receptor E1 (931 aa).

Residues Met-1–Gly-27 form the signal peptide. At Gln-28–Glu-644 the chain is on the extracellular side. 2 consecutive EGF-like domains span residues Gly-32–Gln-80 and Asp-81–Ala-132. Disulfide bonds link Cys-36–Cys-48, Cys-42–Cys-57, Cys-59–Cys-79, Cys-85–Cys-98, Cys-92–Cys-107, Cys-109–Cys-131, Cys-137–Cys-149, Cys-143–Cys-158, Cys-160–Cys-171, Cys-177–Cys-189, Cys-183–Cys-198, Cys-200–Cys-220, Cys-226–Cys-239, Cys-233–Cys-248, Cys-250–Cys-270, Cys-276–Cys-286, Cys-280–Cys-295, Cys-297–Cys-317, Cys-323–Cys-336, Cys-330–Cys-345, and Cys-347–Cys-366. Residues Asp-133–Glu-172 enclose the EGF-like 3; calcium-binding domain. Asn-148 and Asn-167 each carry an N-linked (GlcNAc...) asparagine glycan. The EGF-like 4; calcium-binding domain maps to Asp-173 to Glu-221. An EGF-like 5; calcium-binding domain is found at Asp-222 to Thr-271. Asn-229 carries N-linked (GlcNAc...) asparagine glycosylation. N-linked (GlcNAc...) asparagine glycans are attached at residues Asn-269 and Asn-283. One can recognise an EGF-like 6; calcium-binding domain in the interval Asp-272 to Glu-318. Positions Asp-319–Lys-367 constitute an EGF-like 7; calcium-binding domain. Asn-405, Asn-417, Asn-474, and Asn-498 each carry an N-linked (GlcNAc...) asparagine glycan. The 161-residue stretch at Glu-482–Thr-642 folds into the GAIN-B domain. Residues Arg-506–Asp-508 carry the Cell attachment site motif. 2 disulfides stabilise this stretch: Cys-595–Cys-624 and Cys-612–Cys-626. The GPS stretch occupies residues Cys-595–Thr-642. Residues Phe-645–Cys-672 form a helical membrane-spanning segment. Topologically, residues Arg-673–Asn-679 are cytoplasmic. Residues Thr-680 to Ile-701 traverse the membrane as a helical segment. Topologically, residues Asp-702–Ala-711 are extracellular. Asn-706 carries N-linked (GlcNAc...) asparagine glycosylation. Residues Ile-712–Leu-735 traverse the membrane as a helical segment. At Phe-736–Lys-754 the chain is on the cytoplasmic side. A helical membrane pass occupies residues Met-755–Val-776. The Extracellular portion of the chain corresponds to Gln-777–Glu-792. A helical membrane pass occupies residues Thr-793–Leu-821. Over Arg-822–Arg-839 the chain is Cytoplasmic. A helical membrane pass occupies residues Leu-840–Gly-859. Topologically, residues Ile-860–Phe-874 are extracellular. Residues Thr-875–Arg-897 traverse the membrane as a helical segment. The Cytoplasmic portion of the chain corresponds to Asp-898 to Gly-931.

The protein belongs to the G-protein coupled receptor 2 family. Adhesion G-protein coupled receptor (ADGR) subfamily. In terms of tissue distribution, in macrophages; but absent from those which are localized within T-cell areas of lymph nodes and spleen. Low level of expression on blood monocytes.

Its subcellular location is the cell membrane. Its function is as follows. Orphan receptor involved in cell adhesion and probably in cell-cell interactions specifically involving cells of the immune system. May play a role in regulatory T-cells (Treg) development. The polypeptide is Adhesion G protein-coupled receptor E1 (Adgre1) (Mus musculus (Mouse)).